The following is a 1166-amino-acid chain: DNA-directed RNA polymerase subunit beta (1166 aa).

It belongs to the RNA polymerase beta chain family. The RNAP catalytic core consists of 2 alpha, 1 beta, 1 beta' and 1 omega subunit. When a sigma factor is associated with the core the holoenzyme is formed, which can initiate transcription.

It catalyses the reaction RNA(n) + a ribonucleoside 5'-triphosphate = RNA(n+1) + diphosphate. Its function is as follows. DNA-dependent RNA polymerase catalyzes the transcription of DNA into RNA using the four ribonucleoside triphosphates as substrates. The chain is DNA-directed RNA polymerase subunit beta from Nocardioides sp. (strain ATCC BAA-499 / JS614).